A 259-amino-acid chain; its full sequence is Troponin T, fast skeletal muscle (259 aa).

Residues 1–36 show a composition bias toward acidic residues; sequence MSDEETEQVEEQYEEEEEAQEEEVQEEAPEPEEVQE. Positions 1 to 62 are disordered; it reads MSDEETEQVE…EKVDFDDIQK (62 aa). S2 bears the N-acetylserine mark. S2 carries the post-translational modification Phosphoserine. Residues 50-62 show a composition bias toward basic and acidic residues; sequence PEGEKVDFDDIQK. At S78 the chain carries Phosphoserine. Over residues 101–143 the composition is skewed to basic and acidic residues; sequence RAERAEQQRIRAEKERERQNRLAEEKARREEEDAKRRAEDDLK. The disordered stretch occupies residues 101–180; the sequence is RAERAEQQRI…TAREMKKKIL (80 aa). Residues S149, S156, and S157 each carry the phosphoserine modification. Residues 171–180 show a composition bias toward basic and acidic residues; that stretch reads TAREMKKKIL. S193 is modified (phosphoserine). A Phosphotyrosine modification is found at Y209. The segment at 235-259 is disordered; that stretch reads RIDQAQKHSKKAGATAKGKVGGRWK.

This sequence belongs to the troponin T family.

Its function is as follows. Troponin T is the tropomyosin-binding subunit of troponin, the thin filament regulatory complex which confers calcium-sensitivity to striated muscle actomyosin ATPase activity. The sequence is that of Troponin T, fast skeletal muscle (Tnnt3) from Rattus norvegicus (Rat).